The following is a 1214-amino-acid chain: Protein argonaute-2 (1214 aa).

The tract at residues 1 to 412 (MGKKDKNKKG…GSIKRGTIGK (412 aa)) is disordered. 2 stretches are compositionally biased toward low complexity: residues 18–93 (PQPQ…QQKS) and 107–117 (KQQVQGWTKQG). 7 stretches are compositionally biased toward gly residues: residues 118 to 131 (QQGG…GQDG), 141 to 154 (QQGG…GQEG), 164 to 177 (QQGG…GQEG), 187 to 200 (QQGG…GQEG), 210 to 223 (QQGG…GQEG), 233 to 246 (QQGG…GQEG), and 256 to 269 (QQGG…GQEG). The span at 270–282 (GYQQRPPGQQQGG) shows a compositional bias: low complexity. 3 stretches are compositionally biased toward gly residues: residues 302-315 (QQGG…GQEG), 325-338 (QQGG…GQEG), and 348-361 (QQGG…GQEG). Residues 362–394 (GYQQRPPGQQPNQTQSQGQYQSRGPPQQQQAAP) are compositionally biased toward low complexity. The PAZ domain maps to 608–717 (LERFSLKAKI…LPIELCSIEE (110 aa)). An interaction with guide RNA region spans residues 681–686 (YFHSRN). Residues 885–1186 (LAIVIIPQFR…ARGRVYLTGT (302 aa)) form the Piwi domain. Residues Asp-965 and Asp-1037 each coordinate a divalent metal cation. 3 interaction with guide RNA regions span residues 1075 to 1076 (KR), 1119 to 1127 (HQAIQGTAK), and 1156 to 1178 (FPRC…VAAR). His-1173 contacts a divalent metal cation.

It belongs to the argonaute family. Ago subfamily. As to quaternary structure, interacts with Fmr1, Dcr-1 and vig to form the RNA-induced silencing complex (RISC), a ribonucleoprotein (RNP) complex involved in translation regulation, other components of the complex are RpL5, RpL11 and Rm62. As part of the RISC complex, interacts with Tudor-SN. Interacts with Taf11. In terms of assembly, (Microbial infection) Interacts with cricket paralysis virus protein 1A; this interaction may block the RISC activity. It depends on Mg(2+) as a cofactor. The cofactor is Mn(2+).

Its subcellular location is the nucleus. It is found in the cytoplasm. It localises to the cytoplasmic ribonucleoprotein granule. In terms of biological role, essential for RNA interference (RNAi); double-stranded RNA induces potent and specific gene silencing. RNAi is mediated by the RNA-induced silencing complex (RISC), a sequence-specific, multicomponent nuclease that destroys or silences messenger RNAs homologous to the silencing trigger. The chain is Protein argonaute-2 from Drosophila melanogaster (Fruit fly).